Reading from the N-terminus, the 278-residue chain is Undecaprenyl-diphosphatase 1 (278 aa).

5 helical membrane-spanning segments follow: residues leucine 85 to isoleucine 105, alanine 108 to tryptophan 128, valine 188 to glutamate 208, valine 218 to cysteine 238, and phenylalanine 254 to leucine 274.

This sequence belongs to the UppP family.

Its subcellular location is the cell inner membrane. The enzyme catalyses di-trans,octa-cis-undecaprenyl diphosphate + H2O = di-trans,octa-cis-undecaprenyl phosphate + phosphate + H(+). Functionally, catalyzes the dephosphorylation of undecaprenyl diphosphate (UPP). Confers resistance to bacitracin. This is Undecaprenyl-diphosphatase 1 from Paraburkholderia xenovorans (strain LB400).